A 122-amino-acid chain; its full sequence is UPF0344 protein BcerKBAB4_1054 (122 aa).

The next 4 membrane-spanning stretches (helical) occupy residues 6–26 (ITAW…YSAG), 38–58 (LMYI…VKTA), 65–85 (WYGM…MVLV), and 92–112 (PTGA…YLGL).

Belongs to the UPF0344 family.

It is found in the cell membrane. The protein is UPF0344 protein BcerKBAB4_1054 of Bacillus mycoides (strain KBAB4) (Bacillus weihenstephanensis).